The following is a 186-amino-acid chain: CASP-like protein 7 (186 aa).

Residues 1–26 (MKGGSIEAGEVSKDASPRKGVARGLS) are Cytoplasmic-facing. Residues 27-47 (IMDFILRIIAAVATLGSALAM) form a helical membrane-spanning segment. Residues 48-72 (GTTNETLPFATQFIKFRAEFDDLPS) lie on the Extracellular side of the membrane. A glycan (N-linked (GlcNAc...) asparagine) is linked at Asn-51. Residues 73-93 (LVFFVMANAVVCGYLVLSLMI) traverse the membrane as a helical segment. The Cytoplasmic segment spans residues 94–107 (SVFHILRSTPVKSR). Residues 108–128 (ILLVALDTVMLSLVTASASAA) traverse the membrane as a helical segment. Topologically, residues 129–162 (TSIVYIAHNGNTGANWFAICQQYNNFCERISGSL) are extracellular. Residues 163 to 183 (IGSYIAVALFIILIMLSLVAI) traverse the membrane as a helical segment. The Cytoplasmic segment spans residues 184-186 (SRN).

It belongs to the Casparian strip membrane proteins (CASP) family. In terms of assembly, homodimer and heterodimers.

The protein localises to the cell membrane. In terms of biological role, regulates membrane-cell wall junctions and localized cell wall deposition. Required for establishment of the Casparian strip membrane domain (CSD) and the subsequent formation of Casparian strips, a cell wall modification of the root endodermis that determines an apoplastic barrier between the intraorganismal apoplasm and the extraorganismal apoplasm and prevents lateral diffusion. This Glycine max (Soybean) protein is CASP-like protein 7.